A 337-amino-acid polypeptide reads, in one-letter code: Protein LEG1 homolog (337 aa).

An N-terminal signal peptide occupies residues 1 to 20 (MAVLASWVWVLAGCFCAAVA). A glycan (N-linked (GlcNAc...) asparagine) is linked at asparagine 171.

This sequence belongs to the LEG1 family.

The protein localises to the secreted. May be involved in early liver development. The protein is Protein LEG1 homolog of Mus musculus (Mouse).